The chain runs to 123 residues: Small ribosomal subunit protein uS13 (123 aa).

Residues 97–123 form a disordered region; that stretch reads PVRGQRTHTNAKTRKGRSKLPVAAKKK.

The protein belongs to the universal ribosomal protein uS13 family. Part of the 30S ribosomal subunit. Forms a loose heterodimer with protein S19. Forms two bridges to the 50S subunit in the 70S ribosome.

Functionally, located at the top of the head of the 30S subunit, it contacts several helices of the 16S rRNA. In the 70S ribosome it contacts the 23S rRNA (bridge B1a) and protein L5 of the 50S subunit (bridge B1b), connecting the 2 subunits; these bridges are implicated in subunit movement. Contacts the tRNAs in the A and P-sites. This is Small ribosomal subunit protein uS13 from Ehrlichia canis (strain Jake).